The chain runs to 469 residues: Ribosomal protein uS12 methylthiotransferase RimO (469 aa).

Residues 3 to 119 enclose the MTTase N-terminal domain; it reads TRVYMHTLGC…VARIVSDAQA (117 aa). [4Fe-4S] cluster is bound by residues C12, C48, C82, C154, C158, and C161. Positions 140-370 constitute a Radical SAM core domain; that stretch reads SLPSHTAYLK…MAVQQAISRA (231 aa). One can recognise a TRAM domain in the interval 373 to 441; the sequence is QAMIGRRVEV…EYDLVGRVVA (69 aa). The segment at 444-469 is disordered; that stretch reads PSRAARPLPAAPRAAPARKGGLNVLR. Positions 447–461 are enriched in low complexity; that stretch reads AARPLPAAPRAAPAR.

It belongs to the methylthiotransferase family. RimO subfamily. It depends on [4Fe-4S] cluster as a cofactor.

Its subcellular location is the cytoplasm. It catalyses the reaction L-aspartate(89)-[ribosomal protein uS12]-hydrogen + (sulfur carrier)-SH + AH2 + 2 S-adenosyl-L-methionine = 3-methylsulfanyl-L-aspartate(89)-[ribosomal protein uS12]-hydrogen + (sulfur carrier)-H + 5'-deoxyadenosine + L-methionine + A + S-adenosyl-L-homocysteine + 2 H(+). Catalyzes the methylthiolation of an aspartic acid residue of ribosomal protein uS12. The sequence is that of Ribosomal protein uS12 methylthiotransferase RimO from Anaeromyxobacter sp. (strain K).